A 441-amino-acid polypeptide reads, in one-letter code: Glutamate--tRNA ligase 1 (441 aa).

The 'HIGH' region motif lies at 8 to 18 (PSPTGYIHIGN). Residues 239–243 (ALSKR) carry the 'KMSKS' region motif. K242 is a binding site for ATP.

Belongs to the class-I aminoacyl-tRNA synthetase family. Glutamate--tRNA ligase type 1 subfamily. In terms of assembly, monomer.

The protein localises to the cytoplasm. It catalyses the reaction tRNA(Glu) + L-glutamate + ATP = L-glutamyl-tRNA(Glu) + AMP + diphosphate. Functionally, catalyzes the attachment of glutamate to tRNA(Glu) in a two-step reaction: glutamate is first activated by ATP to form Glu-AMP and then transferred to the acceptor end of tRNA(Glu). The chain is Glutamate--tRNA ligase 1 from Roseobacter denitrificans (strain ATCC 33942 / OCh 114) (Erythrobacter sp. (strain OCh 114)).